A 429-amino-acid polypeptide reads, in one-letter code: Serine hydroxymethyltransferase (429 aa).

(6S)-5,6,7,8-tetrahydrofolate contacts are provided by residues Leu-130 and Gly-134–Leu-136. Lys-239 is subject to N6-(pyridoxal phosphate)lysine.

Belongs to the SHMT family. Homodimer. Requires pyridoxal 5'-phosphate as cofactor.

The protein resides in the cytoplasm. It carries out the reaction (6R)-5,10-methylene-5,6,7,8-tetrahydrofolate + glycine + H2O = (6S)-5,6,7,8-tetrahydrofolate + L-serine. It participates in one-carbon metabolism; tetrahydrofolate interconversion. It functions in the pathway amino-acid biosynthesis; glycine biosynthesis; glycine from L-serine: step 1/1. Its function is as follows. Catalyzes the reversible interconversion of serine and glycine with tetrahydrofolate (THF) serving as the one-carbon carrier. This reaction serves as the major source of one-carbon groups required for the biosynthesis of purines, thymidylate, methionine, and other important biomolecules. Also exhibits THF-independent aldolase activity toward beta-hydroxyamino acids, producing glycine and aldehydes, via a retro-aldol mechanism. This Phenylobacterium zucineum (strain HLK1) protein is Serine hydroxymethyltransferase.